The chain runs to 343 residues: MKVILLFVLAVFTVFVSSRGIPLEEQSQFLEFQDKFNKKYSHEEYLERFEIFKSNLGKIEELNLIAINHKADTKFGVNKFADLSSDEFKNYYLNNKEAIFTDDLPVADYLDDEFINSIPTAFDWRTRGAVTPVKNQGQCGSCWSFSTTGNVEGQHFISQNKLVSLSEQNLVDCDHECMEYEGEQACDEGCNGGLQPNAYNYIIKNGGIQTESSYPYTAETGTQCNFNSANIGAKISNFTMIPKNETVMAGYIVSTGPLAIAADAVEWQFYIGGVFDIPCNPNSLDHGILIVGYSAKNTIFRKNMPYWIVKNSWGADWGEQGYIYLRRGKNTCGVSNFVSTSII.

The first 18 residues, 1 to 18, serve as a signal peptide directing secretion; sequence MKVILLFVLAVFTVFVSS. A propeptide spans 19–117 (activation peptide); that stretch reads RGIPLEEQSQ…DYLDDEFINS (99 aa). 3 cysteine pairs are disulfide-bonded: cysteine 139–cysteine 190, cysteine 173–cysteine 224, and cysteine 279–cysteine 332. Residue cysteine 142 is part of the active site. Residues histidine 286 and asparagine 311 contribute to the active site.

Belongs to the peptidase C1 family. Post-translationally, phosphoglycosylated, contains GlcNAc-alpha-1-P-Ser residues.

The protein localises to the lysosome. Cysteine proteinases 1 and 2 are believed to participate in the breakdown of protein during differentiation of Dictyostelium as a response to starvation. In Dictyostelium discoideum (Social amoeba), this protein is Cysteine proteinase 1 (cprA).